Consider the following 522-residue polypeptide: E3 ubiquitin-protein ligase TRIM65 (522 aa).

An N-acetylalanine modification is found at Ala-2. An RING-type zinc finger spans residues 13-52 (CSICLGRYRDPVTLPCGHSFCGNCIQDSWRSCEKSCPECR). Residues 92 to 134 (SHSARCLRHGRPLEFFCRTEGLCVCSACTVHDCSHHERALLDV) form a B box-type zinc finger. Residues 141-229 (DQLRARVLVT…QRLTDHLRAL (89 aa)) are a coiled coil. Ser-187 carries the post-translational modification Phosphoserine. A B30.2/SPRY domain is found at 316-509 (APVPSAVCPL…LTLCHQPEAT (194 aa)).

The protein belongs to the TRIM/RBCC family. As to quaternary structure, homo-multimerizes. Interacts with ARRDC4.

It localises to the cytoplasm. It carries out the reaction S-ubiquitinyl-[E2 ubiquitin-conjugating enzyme]-L-cysteine + [acceptor protein]-L-lysine = [E2 ubiquitin-conjugating enzyme]-L-cysteine + N(6)-ubiquitinyl-[acceptor protein]-L-lysine.. It functions in the pathway protein modification; protein ubiquitination. E3 ubiquitin ligase that plays a role in several processes including innate immnity, autophagy or inflammation. Negatively regulates miRNAs by modulating the ubiquitination and stability of TNRC6A, a protein involved in RNA-mediated gene silencing by both micro-RNAs (miRNAs) and short interfering RNAs. This ubiquitination results in the suppressed expression of miR-138-5p leading to increased autophagy. Upon enteroviral infection, promotes 'Lys-63'-mediated ubiquitination activation of IFIH1/MDA5 leading to innate signaling cascade. Mechanistically, selectively recognizes MDA5 filaments that occur on dsRNAs. Also plays a role in limitation of inflammation through different mechanisms. First, promotes 'Lys-48'-mediated ubiquitination of VCAM1 leading to its degradation and limitation of LPS-induced lung inflammation. In addition, negatively regulates inflammasome activation by promoting 'lys48'-linked ubiquitination of NLRP3 which is critical for the inhibition of NLRP3 inflammasome activation in resting macrophages. This chain is E3 ubiquitin-protein ligase TRIM65 (Trim65), found in Mus musculus (Mouse).